The primary structure comprises 319 residues: Acetyl-coenzyme A carboxylase carboxyl transferase subunit alpha (319 aa).

The 262-residue stretch at 35-296 folds into the CoA carboxyltransferase C-terminal domain; the sequence is NLDEEVQRLR…KAQLLIDLAE (262 aa).

Belongs to the AccA family. As to quaternary structure, acetyl-CoA carboxylase is a heterohexamer composed of biotin carboxyl carrier protein (AccB), biotin carboxylase (AccC) and two subunits each of ACCase subunit alpha (AccA) and ACCase subunit beta (AccD).

The protein resides in the cytoplasm. It carries out the reaction N(6)-carboxybiotinyl-L-lysyl-[protein] + acetyl-CoA = N(6)-biotinyl-L-lysyl-[protein] + malonyl-CoA. It participates in lipid metabolism; malonyl-CoA biosynthesis; malonyl-CoA from acetyl-CoA: step 1/1. In terms of biological role, component of the acetyl coenzyme A carboxylase (ACC) complex. First, biotin carboxylase catalyzes the carboxylation of biotin on its carrier protein (BCCP) and then the CO(2) group is transferred by the carboxyltransferase to acetyl-CoA to form malonyl-CoA. The polypeptide is Acetyl-coenzyme A carboxylase carboxyl transferase subunit alpha (Photorhabdus laumondii subsp. laumondii (strain DSM 15139 / CIP 105565 / TT01) (Photorhabdus luminescens subsp. laumondii)).